A 337-amino-acid polypeptide reads, in one-letter code: Basic membrane protein A1 (337 aa).

Residues 1-17 form the signal peptide; that stretch reads MNKLLLLILFECIIFLS. A lipid anchor (N-palmitoyl cysteine) is attached at C18. The S-diacylglycerol cysteine moiety is linked to residue C18.

The protein belongs to the BMP lipoprotein family. In terms of assembly, monomer.

It localises to the cell inner membrane. Its function is as follows. Immunogenic protein. May be part of an ABC-type nucleoside uptake system involved in the purine salvage pathway. In Borrelia garinii subsp. bavariensis (strain ATCC BAA-2496 / DSM 23469 / PBi) (Borreliella bavariensis), this protein is Basic membrane protein A1 (bmpA1).